A 752-amino-acid chain; its full sequence is MSRTPLDTVEHAAATPDVELPWAELGLKKDEYERVVEILGRRPTGAELAMYSVMWSEHCSYKSSKVHLRQFGEKAPQSDALLVGIGENAGVVDVGQGYAVTFKVESHNHPSYVEPYQGAATGVGGIVRDIIAMGARPVAVVDPLRFGAADHPDTKRVLPGVVAGIGGYGNCLGLPNIGGEVVFDACYQGNPLVNAGAIGVMRHEDIHLAKASGAGNKVILYGARTGGDGIGGASILASETFDDAKPSKRPAVQVGDPFQEKLLIECTLEAFAEKLVVGIQDLGAAGLSCATSELASNGSGGMRVTLDDVPLRDSTLSPEEILMSESQERMCAVVEPEKVDRFLAICEKWDVIATVIGEVTDGDRLEIYWHGGKIVDVDPRTVAHDGPVYERPYARPEWQDALQADDANKLPRPSSSEELRDQVLKLVASPNQASKSWITSQYDHFVQGNTVLAQPEDSGMIRIDAESGLGVAIATDGNGRYAKLDPYAGAQLALSEAYRNVATTGAKPLAVSDCLNFGSPEDPAVMWQFAEAIRGLADACQQLGTPVTGGNVSLYNQTGEVAIHPTPVVAVLGVIDDVARRTPVAFQEEGQLLYLLGDTREEFGGSAWSQVVHDHLGGLPPQVDLERERLLGEILISASRDGMIDAAHDLSDGGLIQAVVESALLGGKGARLVVPDGLDAFTFLFSESAGRAVVAVPRSEELRFNDMCGARGLPVTRIGVVDGDSVEVQGEFTLPLAELRKAHEETIPALLA.

His-58 is a catalytic residue. Residues Tyr-61 and Lys-103 each coordinate ATP. Mg(2+) is bound at residue Glu-105. Substrate-binding positions include Ser-106–His-109 and Arg-128. His-107 acts as the Proton acceptor in catalysis. Asp-129 contacts Mg(2+). Gln-253 contributes to the substrate binding site. Asp-281 is a Mg(2+) binding site. Substrate is bound at residue Glu-325–Gln-327. Positions 513 and 550 each coordinate ATP. Residue Asn-551 participates in Mg(2+) binding. Ser-553 serves as a coordination point for substrate.

The protein belongs to the FGAMS family. As to quaternary structure, monomer. Part of the FGAM synthase complex composed of 1 PurL, 1 PurQ and 2 PurS subunits.

The protein localises to the cytoplasm. The enzyme catalyses N(2)-formyl-N(1)-(5-phospho-beta-D-ribosyl)glycinamide + L-glutamine + ATP + H2O = 2-formamido-N(1)-(5-O-phospho-beta-D-ribosyl)acetamidine + L-glutamate + ADP + phosphate + H(+). Its pathway is purine metabolism; IMP biosynthesis via de novo pathway; 5-amino-1-(5-phospho-D-ribosyl)imidazole from N(2)-formyl-N(1)-(5-phospho-D-ribosyl)glycinamide: step 1/2. Its function is as follows. Part of the phosphoribosylformylglycinamidine synthase complex involved in the purines biosynthetic pathway. Catalyzes the ATP-dependent conversion of formylglycinamide ribonucleotide (FGAR) and glutamine to yield formylglycinamidine ribonucleotide (FGAM) and glutamate. The FGAM synthase complex is composed of three subunits. PurQ produces an ammonia molecule by converting glutamine to glutamate. PurL transfers the ammonia molecule to FGAR to form FGAM in an ATP-dependent manner. PurS interacts with PurQ and PurL and is thought to assist in the transfer of the ammonia molecule from PurQ to PurL. The protein is Phosphoribosylformylglycinamidine synthase subunit PurL of Streptomyces avermitilis (strain ATCC 31267 / DSM 46492 / JCM 5070 / NBRC 14893 / NCIMB 12804 / NRRL 8165 / MA-4680).